Reading from the N-terminus, the 96-residue chain is MKIRPLQDRLIVKRVAEENKTKGGLFIPDTAKEKPLEGKVIAVGNGKVQEDGKVRPLDIKAGDTILFSKYAGTEIKLDGEEHLILREEDVLGVIEK.

Belongs to the GroES chaperonin family. In terms of assembly, heptamer of 7 subunits arranged in a ring. Interacts with the chaperonin GroEL.

Its subcellular location is the cytoplasm. In terms of biological role, together with the chaperonin GroEL, plays an essential role in assisting protein folding. The GroEL-GroES system forms a nano-cage that allows encapsulation of the non-native substrate proteins and provides a physical environment optimized to promote and accelerate protein folding. GroES binds to the apical surface of the GroEL ring, thereby capping the opening of the GroEL channel. The polypeptide is Co-chaperonin GroES (Myxococcus xanthus (strain DK1622)).